Consider the following 400-residue polypeptide: NAD-dependent protein deacetylase sirtuin-7 (400 aa).

The interval 1-28 is disordered; sequence MAAGGLSRSERKAAERVRRLREEQQRER. Residues 8-28 are compositionally biased toward basic and acidic residues; that stretch reads RSERKAAERVRRLREEQQRER. One can recognise a Deacetylase sirtuin-type domain in the interval 82-329; sequence PEELQRKVRE…QLLMDELGLE (248 aa). Residues 107–126 and 167–170 each bind NAD(+); these read GAGISTAASIPDYRGPNGVW and QNCD. The active-site Proton acceptor is the histidine 187. Zn(2+)-binding residues include cysteine 195, cysteine 198, cysteine 225, and cysteine 228. NAD(+) is bound by residues 268–270, 297–299, and cysteine 315; these read GSS and NLQ. A disordered region spans residues 354 to 380; that stretch reads SHSRKSLCRSREEPGPGDRGAPLSSAP. The residue at position 388 (arginine 388) is an Asymmetric dimethylarginine; alternate. At arginine 388 the chain carries Omega-N-methylarginine; alternate.

This sequence belongs to the sirtuin family. Class IV subfamily. In terms of assembly, interacts with UBTF and the RNA polymerase I complex. Interacts with components of the B-WICH complex, such as MYBBP1A, SMARCA5/SNF2H and BAZ1B/WSTF. Interacts with ELK4, leading to stabilization at target promoters for H3K18Ac deacetylation. Interacts with histone H2A and/or histone H2B. Interacts with DNMT1. Interacts with SIRT1. Requires Zn(2+) as cofactor. Post-translationally, phosphorylated during mitosis. Methylation at Arg-388 by PRMT6 inhibits the H3K18Ac histone deacetylase activity, promoting mitochondria biogenesis and maintaining mitochondria respiration. In terms of processing, ubiquitinated via 'Lys-63'-linked ubiquitin chains. Deubiquitinated by USP7, inhibiting the H3K18Ac histone deacetylase activity and regulating gluconeogenesis. Ubiquitinated by E3 ubiquitin-protein ligase complex containing FBXO7; leading to proteasomal degradation.

The protein localises to the nucleus. Its subcellular location is the nucleolus. The protein resides in the nucleoplasm. It is found in the chromosome. It localises to the cytoplasm. The enzyme catalyses N(6)-acetyl-L-lysyl-[protein] + NAD(+) + H2O = 2''-O-acetyl-ADP-D-ribose + nicotinamide + L-lysyl-[protein]. It carries out the reaction N(6)-glutaryl-L-lysyl-[protein] + NAD(+) + H2O = 2''-O-glutaryl-ADP-D-ribose + nicotinamide + L-lysyl-[protein]. It catalyses the reaction N(6)-succinyl-L-lysyl-[protein] + NAD(+) + H2O = 2''-O-succinyl-ADP-D-ribose + nicotinamide + L-lysyl-[protein]. The catalysed reaction is N(6)-propanoyl-L-lysyl-[protein] + NAD(+) + H2O = 3''-O-propanoyl-ADP-D-ribose + nicotinamide + L-lysyl-[protein]. The enzyme catalyses N(6)-decanoyl-L-lysyl-[protein] + NAD(+) + H2O = 2''-O-decanoyl-ADP-D-ribose + nicotinamide + L-lysyl-[protein]. With respect to regulation, NAD-dependent protein-lysine deacetylase and deacylase activities are activated by nucleic acids. Histone deacetylase activity is activated by DNA. Protein-lysine deacylase activity is activated by RNA. H3K18Ac histone deacetylase activity is inhibited by methylation at Arg-388. H3K18Ac histone deacetylase activity is inhibited by deubiquitination by USP7. In terms of biological role, NAD-dependent protein-lysine deacylase that can act both as a deacetylase or deacylase (desuccinylase, depropionylase, deglutarylase and dedecanoylase), depending on the context. Specifically mediates deacetylation of histone H3 at 'Lys-18' (H3K18Ac). In contrast to other histone deacetylases, displays strong preference for a specific histone mark, H3K18Ac, directly linked to control of gene expression. H3K18Ac is mainly present around the transcription start site of genes and has been linked to activation of nuclear hormone receptors; SIRT7 thereby acts as a transcription repressor. Moreover, H3K18 hypoacetylation has been reported as a marker of malignancy in various cancers and seems to maintain the transformed phenotype of cancer cells. Also able to mediate deacetylation of histone H3 at 'Lys-36' (H3K36Ac) in the context of nucleosomes. Also mediates deacetylation of non-histone proteins, such as ATM, CDK9, DDX21, DDB1, FBL, FKBP5/FKBP51, GABPB1, RAN, RRP9/U3-55K and POLR1E/PAF53. Enriched in nucleolus where it stimulates transcription activity of the RNA polymerase I complex. Acts by mediating the deacetylation of the RNA polymerase I subunit POLR1E/PAF53, thereby promoting the association of RNA polymerase I with the rDNA promoter region and coding region. In response to metabolic stress, SIRT7 is released from nucleoli leading to hyperacetylation of POLR1E/PAF53 and decreased RNA polymerase I transcription. Required to restore the transcription of ribosomal RNA (rRNA) at the exit from mitosis. Promotes pre-ribosomal RNA (pre-rRNA) cleavage at the 5'-terminal processing site by mediating deacetylation of RRP9/U3-55K, a core subunit of the U3 snoRNP complex. Mediates 'Lys-37' deacetylation of Ran, thereby regulating the nuclear export of NF-kappa-B subunit RELA/p65. Acts as a regulator of DNA damage repair by mediating deacetylation of ATM during the late stages of DNA damage response, promoting ATM dephosphorylation and deactivation. Suppresses the activity of the DCX (DDB1-CUL4-X-box) E3 ubiquitin-protein ligase complexes by mediating deacetylation of DDB1, which prevents the interaction between DDB1 and CUL4 (CUL4A or CUL4B). Activates RNA polymerase II transcription by mediating deacetylation of CDK9, thereby promoting 'Ser-2' phosphorylation of the C-terminal domain (CTD) of RNA polymerase II. Deacetylates FBL, promoting histone-glutamine methyltransferase activity of FBL. Acts as a regulator of mitochondrial function by catalyzing deacetylation of GABPB1. Regulates Akt/AKT1 activity by mediating deacetylation of FKBP5/FKBP51. Required to prevent R-loop-associated DNA damage and transcription-associated genomic instability by mediating deacetylation and subsequent activation of DDX21, thereby overcoming R-loop-mediated stalling of RNA polymerases. In addition to protein deacetylase activity, also acts as a protein-lysine deacylase. Acts as a protein depropionylase by mediating depropionylation of Osterix (SP7), thereby regulating bone formation by osteoblasts. Acts as a histone deglutarylase by mediating deglutarylation of histone H4 on 'Lys-91' (H4K91glu); a mark that destabilizes nucleosomes by promoting dissociation of the H2A-H2B dimers from nucleosomes. Acts as a histone desuccinylase: in response to DNA damage, recruited to DNA double-strand breaks (DSBs) and catalyzes desuccinylation of histone H3 on 'Lys-122' (H3K122succ), thereby promoting chromatin condensation and DSB repair. Also promotes DSB repair by promoting H3K18Ac deacetylation, regulating non-homologous end joining (NHEJ). Along with its role in DNA repair, required for chromosome synapsis during prophase I of female meiosis by catalyzing H3K18Ac deacetylation. Involved in transcriptional repression of LINE-1 retrotransposon via H3K18Ac deacetylation, and promotes their association with the nuclear lamina. Required to stabilize ribosomal DNA (rDNA) heterochromatin and prevent cellular senescence induced by rDNA instability. Acts as a negative regulator of SIRT1 by preventing autodeacetylation of SIRT1, restricting SIRT1 deacetylase activity. The protein is NAD-dependent protein deacetylase sirtuin-7 (SIRT7) of Bos taurus (Bovine).